We begin with the raw amino-acid sequence, 496 residues long: MATSNKNMLLNYVPVYVMLPLGVINVNNVFEDPDGLKEQLVQLRAAGVDGVMVDVWWGIIEQKGPKEYDWSAYKSLFQLVQECGLKLQAIMSFHQCGGNVGDVVTIPIPQWVLDIGESDPDIFYTNRSGTRDKEYLTVGVDNKPIFHGRTAIEIYSDYMKSFRENMSEFLKSELIIDIEVGLGPAGELRYPSYPQNQGWVFPGIGEFQCYDKYLKADFKAAAAKAGHSEWELPDDAGTYNDIPESTEFFKTNGTYLTEKGKFFLTWYSNQLLNHGDQILDEANKAFLGCKVKLAIKVSGIHWWYKAQNHAAELTAGYYNLDDRDGYRPIAKMVSRHHGILNFTCLEMRDSEQSSDAQSAPQELVQQVLSGGWRENIEVAGENALSRYDATAYNQIILNARPQGVNKDGPPKLRMYGVTYLRLSDDLLQESNFEIFKKFVVKMHADQSHCDDPQEYNHAIPPLKRSGPNIPVDDLLEATKPILPFPWDSETDMKVDG.

Residues D54, H94, and D102 each coordinate substrate. Catalysis depends on E187, which acts as the Proton donor. The substrate site is built by K296, H301, and T343. Residue E381 is the Proton acceptor of the active site. Substrate-binding positions include 382–383 (NA) and R421.

This sequence belongs to the glycosyl hydrolase 14 family.

It catalyses the reaction Hydrolysis of (1-&gt;4)-alpha-D-glucosidic linkages in polysaccharides so as to remove successive maltose units from the non-reducing ends of the chains.. The chain is Beta-amylase (BMY1) from Trifolium repens (Creeping white clover).